A 399-amino-acid polypeptide reads, in one-letter code: Phosphomevalonate dehydratase large subunit (399 aa).

(R)-5-phosphomevalonate is bound by residues glycine 54, valine 55, serine 56, asparagine 85, and proline 86. A [4Fe-4S] cluster-binding site is contributed by cysteine 125. Positions 144 and 145 each coordinate (R)-5-phosphomevalonate. [4Fe-4S] cluster is bound by residues cysteine 298 and cysteine 355. Lysine 375 serves as a coordination point for (R)-5-phosphomevalonate.

It belongs to the AcnX type II large subunit family. In terms of assembly, heterodimer composed of a large subunit (PMDh-L) and a small subunit (PMDh-S). Requires [4Fe-4S] cluster as cofactor.

The catalysed reaction is (R)-5-phosphomevalonate = (2E)-3-methyl-5-phosphooxypent-2-enoate + H2O. It functions in the pathway isoprenoid biosynthesis; isopentenyl diphosphate biosynthesis via mevalonate pathway. Functionally, component of a hydro-lyase that catalyzes the dehydration of mevalonate 5-phosphate (MVA5P) to form trans-anhydromevalonate 5-phosphate (tAHMP). Involved in the archaeal mevalonate (MVA) pathway, which provides fundamental precursors for isoprenoid biosynthesis, such as isopentenyl diphosphate (IPP) and dimethylallyl diphosphate (DMAPP). The chain is Phosphomevalonate dehydratase large subunit from Methanothermobacter thermautotrophicus (strain ATCC 29096 / DSM 1053 / JCM 10044 / NBRC 100330 / Delta H) (Methanobacterium thermoautotrophicum).